The following is a 256-amino-acid chain: PGL/p-HBAD biosynthesis glycosyltransferase Mb2981 (256 aa).

The protein belongs to the glycosyltransferase 2 family.

Involved in glycosylation steps downstream of mono-O-methyl-glycosyl-p-hydroxybenzoic acid derivative (p-HBAD I) and 2-O-methyl-rhamnosyl-phenolphthiocerol dimycocerosate (mycoside B) during the p-hydroxybenzoic acid derivatives (p-HBAD) and glycosylated phenolphthiocerol dimycocerosates (PGL) biosynthesis. The protein is PGL/p-HBAD biosynthesis glycosyltransferase Mb2981 of Mycobacterium bovis (strain ATCC BAA-935 / AF2122/97).